A 345-amino-acid polypeptide reads, in one-letter code: Leucine zipper protein 2 (345 aa).

Positions 1–19 (MKFNAAHYLLPLLPALVLS) are cleaved as a signal peptide. The stretch at 16 to 211 (LVLSTRQDYE…QMKAMKETVQ (196 aa)) forms a coiled coil. N133 is a glycosylation site (N-linked (GlcNAc...) asparagine). A leucine-zipper region spans residues 164–192 (LRYGKKDLLFKAQQLTELEQKLAVAKNEL). The segment at 223–345 (PPLSLMPSNP…GTPAREEKLL (123 aa)) is disordered. Residues 261-277 (GHHDSSQVQATKEESRR) show a composition bias toward basic and acidic residues. A compositionally biased stretch (polar residues) spans 298–313 (PQSNSTAESELTTQKL). N-linked (GlcNAc...) asparagine glycosylation occurs at N301.

As to expression, expression found only in the brain and spinal cord.

The protein localises to the secreted. This chain is Leucine zipper protein 2 (Luzp2), found in Mus musculus (Mouse).